The primary structure comprises 360 residues: Peptide chain release factor 1 (360 aa).

At Gln-235 the chain carries N5-methylglutamine. The segment at 284–312 is disordered; the sequence is ERQAQAQADTRRNLLGSGDRSDKIRTYNY.

The protein belongs to the prokaryotic/mitochondrial release factor family. In terms of processing, methylated by PrmC. Methylation increases the termination efficiency of RF1.

The protein localises to the cytoplasm. Its function is as follows. Peptide chain release factor 1 directs the termination of translation in response to the peptide chain termination codons UAG and UAA. This Histophilus somni (strain 129Pt) (Haemophilus somnus) protein is Peptide chain release factor 1.